Consider the following 560-residue polypeptide: Alpha-farnesene synthase (560 aa).

Residues Asp-308, Asp-312, and Glu-462 each coordinate Mg(2+). Positions 308-312 (DDIYD) match the DDXXD motif motif.

Belongs to the terpene synthase family. Tpsa subfamily. Mg(2+) is required as a cofactor. In terms of tissue distribution, expressed in the rind tissues of ripe fruits.

The protein resides in the cytoplasm. It catalyses the reaction (2E,6E)-farnesyl diphosphate = (3E,6E)-alpha-farnesene + diphosphate. The protein operates within secondary metabolite biosynthesis; terpenoid biosynthesis. Functionally, sesquiterpene synthase producing exclusively alpha-farnesene. Associated with the production of sesquiterpenes responsible for the aroma of the fruit. The chain is Alpha-farnesene synthase from Cucumis melo (Muskmelon).